Here is an 877-residue protein sequence, read N- to C-terminus: EF-hand domain-containing family member B (877 aa).

Disordered stretches follow at residues 1–47 (MCSF…GRKS) and 268–290 (AQQP…PDRI). EF-hand domains lie at 605–640 (QNFD…ACLH) and 641–676 (LDEK…KDKT). The Ca(2+) site is built by aspartate 618, aspartate 622, glutamate 629, aspartate 654, aspartate 656, aspartate 658, and glutamate 665.

Microtubule inner protein component of sperm flagellar doublet microtubules. Interacts with STIM1 and ORAI1; the interactions take place upon Ca(2+)-store depletion and dissociate through a Ca(2+)-dependent mechanism. Interaction with STIM1 inhibits STIM1 interaction with SARAF. Expressed in trachea multiciliated cells.

It localises to the cytoplasm. It is found in the cytoskeleton. The protein resides in the cilium axoneme. The protein localises to the flagellum axoneme. Its function is as follows. Microtubule inner protein (MIP) part of the dynein-decorated doublet microtubules (DMTs) in cilia axoneme, which is required for motile cilia beating. Cytosolic sensor for calcium, modulates the interaction of STIM1 and ORAI1 upon store depletion and the activation of store-operated Ca(2+) entry (SOCE) and NFAT translocation from cytosol to nucleus. The chain is EF-hand domain-containing family member B from Bos taurus (Bovine).